A 368-amino-acid polypeptide reads, in one-letter code: Flagellar P-ring protein (368 aa).

Residues 1–24 (MTLTRPLALISALAALILALPADA) form the signal peptide.

The protein belongs to the FlgI family. The basal body constitutes a major portion of the flagellar organelle and consists of four rings (L,P,S, and M) mounted on a central rod.

Its subcellular location is the periplasm. The protein resides in the bacterial flagellum basal body. Its function is as follows. Assembles around the rod to form the L-ring and probably protects the motor/basal body from shearing forces during rotation. The chain is Flagellar P-ring protein from Methylobacillus flagellatus (strain ATCC 51484 / DSM 6875 / VKM B-1610 / KT).